The chain runs to 3473 residues: Genome polyprotein (3473 aa).

A coiled-coil region spans residues 514–604 (EVQDALEKSM…RNDIEALKKK (91 aa)). Disordered regions lie at residues 602-644 (KKKP…SEAQ) and 1278-1306 (YLAD…EGEI). Composition is skewed to polar residues over residues 607–622 (QSVT…SGTA) and 1278–1295 (YLAD…SIVN). 2 helical membrane-spanning segments follow: residues 1496 to 1516 (DKWI…LHYY) and 1595 to 1615 (MSSL…GKIP). Positions 1751–1917 (LELMNESYTY…PDVPKNEANP (167 aa)) constitute an SF3 helicase domain. Position 1777–1784 (1777–1784 (GAPGVGKS)) interacts with ATP. The chain crosses the membrane as a helical span at residues 2363 to 2383 (ILLAIGASVAVAGVAVGAVIL). The segment covering 2394 to 2404 (EDEEIEGEEGE) has biased composition (acidic residues). 2 disordered regions span residues 2394-2415 (EDEE…ESDG) and 2438-2465 (VAEA…LGLS). Over residues 2438 to 2451 (VAEAHEEKDAEKPR) the composition is skewed to basic and acidic residues. Residues 2632-2850 (GVDRDLSMTN…YAETLTQEHL (219 aa)) enclose the Peptidase C3 domain. Residues His-2680, Glu-2717, and Cys-2811 each act as for picornain 3C-like protease activity in the active site. The 132-residue stretch at 3155–3286 (TKGFAGDYSK…SVHEEFLDVY (132 aa)) folds into the RdRp catalytic domain.

Specific enzymatic cleavages by picornain 3C-like protease in vivo yield mature proteins. Picornain 3C-like protease is autocatalytically processed.

It is found in the virion. Its subcellular location is the host membrane. The catalysed reaction is RNA(n) + a ribonucleoside 5'-triphosphate = RNA(n+1) + diphosphate. Its function is as follows. Picornain 3C-like protease is a thiol protease that probably cleaves the polyprotein. In Oryza sativa (Rice), this protein is Genome polyprotein.